Consider the following 373-residue polypeptide: Queuine tRNA-ribosyltransferase (373 aa).

The active-site Proton acceptor is the D89. Substrate-binding positions include 89–93 (DSGGF), D143, Q187, and G214. The interval 245 to 251 (GVGKPED) is RNA binding. The active-site Nucleophile is D264. Positions 269 to 273 (TRNAR) are RNA binding; important for wobble base 34 recognition. Zn(2+)-binding residues include C302, C304, C307, and H333.

Belongs to the queuine tRNA-ribosyltransferase family. As to quaternary structure, homodimer. Within each dimer, one monomer is responsible for RNA recognition and catalysis, while the other monomer binds to the replacement base PreQ1. It depends on Zn(2+) as a cofactor.

The catalysed reaction is 7-aminomethyl-7-carbaguanine + guanosine(34) in tRNA = 7-aminomethyl-7-carbaguanosine(34) in tRNA + guanine. It functions in the pathway tRNA modification; tRNA-queuosine biosynthesis. Its function is as follows. Catalyzes the base-exchange of a guanine (G) residue with the queuine precursor 7-aminomethyl-7-deazaguanine (PreQ1) at position 34 (anticodon wobble position) in tRNAs with GU(N) anticodons (tRNA-Asp, -Asn, -His and -Tyr). Catalysis occurs through a double-displacement mechanism. The nucleophile active site attacks the C1' of nucleotide 34 to detach the guanine base from the RNA, forming a covalent enzyme-RNA intermediate. The proton acceptor active site deprotonates the incoming PreQ1, allowing a nucleophilic attack on the C1' of the ribose to form the product. After dissociation, two additional enzymatic reactions on the tRNA convert PreQ1 to queuine (Q), resulting in the hypermodified nucleoside queuosine (7-(((4,5-cis-dihydroxy-2-cyclopenten-1-yl)amino)methyl)-7-deazaguanosine). The protein is Queuine tRNA-ribosyltransferase of Tolumonas auensis (strain DSM 9187 / NBRC 110442 / TA 4).